Reading from the N-terminus, the 912-residue chain is Protein translocase subunit SecA (912 aa).

Residues Gln87, 105 to 109 (GEGKT), and Asp512 contribute to the ATP site. Residues Cys896, Cys898, Cys907, and His908 each coordinate Zn(2+).

Belongs to the SecA family. As to quaternary structure, monomer and homodimer. Part of the essential Sec protein translocation apparatus which comprises SecA, SecYEG and auxiliary proteins SecDF-YajC and YidC. The cofactor is Zn(2+).

It localises to the cell inner membrane. Its subcellular location is the cytoplasm. The enzyme catalyses ATP + H2O + cellular proteinSide 1 = ADP + phosphate + cellular proteinSide 2.. Functionally, part of the Sec protein translocase complex. Interacts with the SecYEG preprotein conducting channel. Has a central role in coupling the hydrolysis of ATP to the transfer of proteins into and across the cell membrane, serving both as a receptor for the preprotein-SecB complex and as an ATP-driven molecular motor driving the stepwise translocation of polypeptide chains across the membrane. The polypeptide is Protein translocase subunit SecA (Pseudomonas fluorescens (strain Pf0-1)).